The sequence spans 303 residues: ATP synthase gamma chain (303 aa).

This sequence belongs to the ATPase gamma chain family. F-type ATPases have 2 components, CF(1) - the catalytic core - and CF(0) - the membrane proton channel. CF(1) has five subunits: alpha(3), beta(3), gamma(1), delta(1), epsilon(1). CF(0) has three main subunits: a, b and c.

The protein localises to the cell inner membrane. In terms of biological role, produces ATP from ADP in the presence of a proton gradient across the membrane. The gamma chain is believed to be important in regulating ATPase activity and the flow of protons through the CF(0) complex. The protein is ATP synthase gamma chain of Elusimicrobium minutum (strain Pei191).